Consider the following 140-residue polypeptide: ATP synthase epsilon chain (140 aa).

The protein belongs to the ATPase epsilon chain family. In terms of assembly, F-type ATPases have 2 components, CF(1) - the catalytic core - and CF(0) - the membrane proton channel. CF(1) has five subunits: alpha(3), beta(3), gamma(1), delta(1), epsilon(1). CF(0) has three main subunits: a, b and c.

It is found in the cell membrane. In terms of biological role, produces ATP from ADP in the presence of a proton gradient across the membrane. This is ATP synthase epsilon chain from Dehalococcoides mccartyi (strain ATCC BAA-2100 / JCM 16839 / KCTC 5957 / BAV1).